The primary structure comprises 238 residues: 2,3,4,5-tetrahydropyridine-2,6-dicarboxylate N-acetyltransferase (238 aa).

This sequence belongs to the transferase hexapeptide repeat family. DapH subfamily.

It carries out the reaction (S)-2,3,4,5-tetrahydrodipicolinate + acetyl-CoA + H2O = L-2-acetamido-6-oxoheptanedioate + CoA. It functions in the pathway amino-acid biosynthesis; L-lysine biosynthesis via DAP pathway; LL-2,6-diaminopimelate from (S)-tetrahydrodipicolinate (acetylase route): step 1/3. In terms of biological role, catalyzes the transfer of an acetyl group from acetyl-CoA to tetrahydrodipicolinate. The sequence is that of 2,3,4,5-tetrahydropyridine-2,6-dicarboxylate N-acetyltransferase from Pseudothermotoga lettingae (strain ATCC BAA-301 / DSM 14385 / NBRC 107922 / TMO) (Thermotoga lettingae).